Consider the following 315-residue polypeptide: Aspartate carbamoyltransferase catalytic subunit (315 aa).

Carbamoyl phosphate contacts are provided by Arg-64 and Thr-65. Lys-92 contacts L-aspartate. Carbamoyl phosphate-binding residues include Arg-114, His-142, and Gln-145. L-aspartate-binding residues include Arg-175 and Arg-229. Residues Gly-270 and Pro-271 each contribute to the carbamoyl phosphate site.

It belongs to the aspartate/ornithine carbamoyltransferase superfamily. ATCase family. As to quaternary structure, heterododecamer (2C3:3R2) of six catalytic PyrB chains organized as two trimers (C3), and six regulatory PyrI chains organized as three dimers (R2).

It carries out the reaction carbamoyl phosphate + L-aspartate = N-carbamoyl-L-aspartate + phosphate + H(+). It functions in the pathway pyrimidine metabolism; UMP biosynthesis via de novo pathway; (S)-dihydroorotate from bicarbonate: step 2/3. In terms of biological role, catalyzes the condensation of carbamoyl phosphate and aspartate to form carbamoyl aspartate and inorganic phosphate, the committed step in the de novo pyrimidine nucleotide biosynthesis pathway. The chain is Aspartate carbamoyltransferase catalytic subunit from Methylorubrum extorquens (strain CM4 / NCIMB 13688) (Methylobacterium extorquens).